The following is a 235-amino-acid chain: MFDPFLEELLSGIKARGAVPVEVPHGLEHNQSSKRSSTIKSWLWDVPGFRRWRVTRLDAGDSLQVLNSVAYPDYTYDHPLMGVDLLWFGAKQKLVAVLDFQPLVQDKDYLERYFDGLKSLNAQFPDLNGEETMRSFDPNQYFSSWLLFCRGGAEQATSSLPTAFSAFLKTYWDLHDKAVKIPSSINPIEVAQLQKNYDIYSAERDPAHGLFTSHFGSEWSDRFLHEFLFPASQPK.

This sequence belongs to the HY2 family.

The enzyme catalyses 15,16-dihydrobiliverdin + oxidized 2[4Fe-4S]-[ferredoxin] = biliverdin IXalpha + reduced 2[4Fe-4S]-[ferredoxin] + 2 H(+). In terms of biological role, catalyzes the two-electron reduction of biliverdin IX-alpha at the C15 methine bridge. This chain is 15,16-dihydrobiliverdin:ferredoxin oxidoreductase, found in Synechococcus sp. (strain CC9605).